The chain runs to 312 residues: uncharacterized protein (312 aa).

This is an uncharacterized protein from Escherichia coli (strain K12).